The following is a 341-amino-acid chain: Pyrophosphate--fructose 6-phosphate 1-phosphotransferase (341 aa).

Diphosphate is bound at residue Gly-10. Glu-103 is a Mg(2+) binding site. Substrate is bound by residues 125–127, Arg-162, 169–171, Glu-221, Arg-265, and 271–274; these read TID, MGR, and HTQR. Catalysis depends on Asp-127, which acts as the Proton acceptor.

It belongs to the phosphofructokinase type A (PFKA) family. Mixed-substrate PFK group III subfamily. As to quaternary structure, homotetramer. Mg(2+) is required as a cofactor.

It is found in the cytoplasm. The catalysed reaction is beta-D-fructose 6-phosphate + diphosphate = beta-D-fructose 1,6-bisphosphate + phosphate + H(+). Its pathway is carbohydrate degradation; glycolysis; D-glyceraldehyde 3-phosphate and glycerone phosphate from D-glucose: step 3/4. Non-allosteric. Catalyzes the phosphorylation of D-fructose 6-phosphate, the first committing step of glycolysis. Uses inorganic phosphate (PPi) as phosphoryl donor instead of ATP like common ATP-dependent phosphofructokinases (ATP-PFKs), which renders the reaction reversible, and can thus function both in glycolysis and gluconeogenesis. Consistently, PPi-PFK can replace the enzymes of both the forward (ATP-PFK) and reverse (fructose-bisphosphatase (FBPase)) reactions. In Amycolatopsis methanolica, this protein is Pyrophosphate--fructose 6-phosphate 1-phosphotransferase.